An 870-amino-acid chain; its full sequence is Disks large homolog 2 (870 aa).

S-palmitoyl cysteine attachment occurs at residues Cys5 and Cys7. Residue Ser28 is modified to Phosphoserine. Position 58 is a phosphotyrosine (Tyr58). Ser65 is subject to Phosphoserine. 2 consecutive PDZ domains span residues 98-184 (EITL…VRRR) and 193-279 (EIKL…VGKP). 6 positions are modified to phosphoserine: Ser307, Ser328, Ser360, Ser365, Ser406, and Ser414. The PDZ 3 domain maps to 421 to 501 (KVVLHKGSTG…QTVTIIAQYQ (81 aa)). A Phosphotyrosine modification is found at Tyr505. Phosphoserine is present on residues Ser528, Ser530, Ser553, Ser627, and Ser635. One can recognise an SH3 domain in the interval 536 to 606 (KRSLYVRAMF…PSKRRVERKE (71 aa)). The Guanylate kinase-like domain occupies 680-855 (TRPVIILGPM…IYNQCKLVIE (176 aa)). 2 positions are modified to phosphotyrosine: Tyr750 and Tyr755.

This sequence belongs to the MAGUK family. Interacts through its PDZ domains with NETO1. Interacts with NOS1/nNOS through second PDZ domain. Interacts with KCNJ2/Kir2.1 (via C-terminus) through one of its PDZ domains. Interacts with KCNJ4, Interacts with FRMPD4 (via C-terminus). Interacts with LRFN1, LRFN2 and LRFN4. Interacts with FASLG. Interacts with KCNJ4. Interacts with ADAM22. Interacts with DGKI (via PDZ-binding motif). Palmitoylation of isoform 1 is not required for targeting to postsynaptic density.

It localises to the cell membrane. Its subcellular location is the postsynaptic density. The protein localises to the synapse. It is found in the membrane. The protein resides in the cell projection. It localises to the axon. Its subcellular location is the perikaryon. In terms of biological role, required for perception of chronic pain through NMDA receptor signaling. Regulates surface expression of NMDA receptors in dorsal horn neurons of the spinal cord. Interacts with the cytoplasmic tail of NMDA receptor subunits as well as inward rectifying potassium channels. Involved in regulation of synaptic stability at cholinergic synapses. Part of the postsynaptic protein scaffold of excitatory synapses. The polypeptide is Disks large homolog 2 (DLG2) (Homo sapiens (Human)).